Reading from the N-terminus, the 466-residue chain is Cysteine--tRNA ligase (466 aa).

Cys28 lines the Zn(2+) pocket. Residues 30–40 carry the 'HIGH' region motif; the sequence is PTVYNYIHIGN. Residues Cys208, His233, and Glu237 each coordinate Zn(2+). Positions 265–269 match the 'KMSKS' region motif; the sequence is KMSKS. An ATP-binding site is contributed by Lys268.

The protein belongs to the class-I aminoacyl-tRNA synthetase family. Monomer. The cofactor is Zn(2+).

It localises to the cytoplasm. The enzyme catalyses tRNA(Cys) + L-cysteine + ATP = L-cysteinyl-tRNA(Cys) + AMP + diphosphate. The polypeptide is Cysteine--tRNA ligase (Staphylococcus aureus (strain MSSA476)).